The sequence spans 110 residues: Protein RnfH (110 aa).

A disordered region spans residues 86-110 (RQRRVEKTRKAGSIEGRRWQNKDSR). Residues 100–110 (EGRRWQNKDSR) show a composition bias toward basic and acidic residues.

The protein belongs to the UPF0125 (RnfH) family.

This is Protein RnfH from Paraburkholderia xenovorans (strain LB400).